The primary structure comprises 199 residues: Dephospho-CoA kinase (199 aa).

The region spanning 3–199 (KVGLTGGICS…DLLEFFTLYQ (197 aa)) is the DPCK domain. ATP is bound at residue 11-16 (CSGKST).

The protein belongs to the CoaE family.

The protein localises to the cytoplasm. The enzyme catalyses 3'-dephospho-CoA + ATP = ADP + CoA + H(+). It participates in cofactor biosynthesis; coenzyme A biosynthesis; CoA from (R)-pantothenate: step 5/5. In terms of biological role, catalyzes the phosphorylation of the 3'-hydroxyl group of dephosphocoenzyme A to form coenzyme A. This is Dephospho-CoA kinase from Clostridium perfringens (strain 13 / Type A).